The sequence spans 129 residues: Phosphomevalonate dehydratase small subunit (129 aa).

Serine 61 (proton acceptor) is an active-site residue.

It belongs to the AcnX type II small subunit family. As to quaternary structure, heterodimer composed of a large subunit (PMDh-L) and a small subunit (PMDh-S).

The catalysed reaction is (R)-5-phosphomevalonate = (2E)-3-methyl-5-phosphooxypent-2-enoate + H2O. It participates in isoprenoid biosynthesis; isopentenyl diphosphate biosynthesis via mevalonate pathway. Functionally, component of a hydro-lyase that catalyzes the dehydration of mevalonate 5-phosphate (MVA5P) to form trans-anhydromevalonate 5-phosphate (tAHMP). Involved in the archaeal mevalonate (MVA) pathway, which provides fundamental precursors for isoprenoid biosynthesis, such as isopentenyl diphosphate (IPP) and dimethylallyl diphosphate (DMAPP). This Methanocaldococcus jannaschii (strain ATCC 43067 / DSM 2661 / JAL-1 / JCM 10045 / NBRC 100440) (Methanococcus jannaschii) protein is Phosphomevalonate dehydratase small subunit.